Here is a 310-residue protein sequence, read N- to C-terminus: Ribosomal RNA small subunit methyltransferase H (310 aa).

Residues 35–37 (GGH), Asp52, Phe79, Asp100, and Gln107 contribute to the S-adenosyl-L-methionine site.

It belongs to the methyltransferase superfamily. RsmH family.

The protein localises to the cytoplasm. It catalyses the reaction cytidine(1402) in 16S rRNA + S-adenosyl-L-methionine = N(4)-methylcytidine(1402) in 16S rRNA + S-adenosyl-L-homocysteine + H(+). Specifically methylates the N4 position of cytidine in position 1402 (C1402) of 16S rRNA. This is Ribosomal RNA small subunit methyltransferase H from Anaeromyxobacter sp. (strain K).